The sequence spans 62 residues: Alpha-conotoxin-like Qc1.2 (62 aa).

The N-terminal stretch at 1 to 21 is a signal peptide; sequence MGMRMMFTVFLLVALATTVAS. Residues 22–48 constitute a propeptide that is removed on maturation; the sequence is FTLDRASNGRNAAADDKPSDWIALAIK. The residue at position 49 (Q49) is a Pyrrolidone carboxylic acid. 2 disulfide bridges follow: C50–C56 and C51–C61.

Belongs to the conotoxin A superfamily. As to expression, expressed by the venom duct.

Its subcellular location is the secreted. In terms of biological role, alpha-conotoxins bind to the nicotinic acetylcholine receptors (nAChR) and inhibit them. This synthetic peptide (10 uM) selectively, but weakly inhibits both rat neuronal alpha-3-beta-2/CHRNA3-CHRNB2 (63%) and alpha-3-beta-4/CHRNA3-CHRNB4 (37%) subtypes of nAChR. The protein is Alpha-conotoxin-like Qc1.2 of Conus quercinus (Oak cone).